The sequence spans 50 residues: Large ribosomal subunit protein bL33B (50 aa).

It belongs to the bacterial ribosomal protein bL33 family.

The sequence is that of Large ribosomal subunit protein bL33B (rpmG2) from Enterococcus faecalis (strain ATCC 700802 / V583).